A 259-amino-acid polypeptide reads, in one-letter code: Ribosomal RNA small subunit methyltransferase J (259 aa).

Residues 109–110, 125–126, 161–162, and Asp179 contribute to the S-adenosyl-L-methionine site; these read RD, ER, and SS.

Belongs to the methyltransferase superfamily. RsmJ family.

It localises to the cytoplasm. The catalysed reaction is guanosine(1516) in 16S rRNA + S-adenosyl-L-methionine = N(2)-methylguanosine(1516) in 16S rRNA + S-adenosyl-L-homocysteine + H(+). Its function is as follows. Specifically methylates the guanosine in position 1516 of 16S rRNA. This chain is Ribosomal RNA small subunit methyltransferase J, found in Shewanella putrefaciens (strain CN-32 / ATCC BAA-453).